Reading from the N-terminus, the 320-residue chain is MPLRKKGAATTKAAATRKDSAKAPASSKRKDAPQHKPELVIITGLSGSGKGSVLKALEDLGFYSVDNLPVELIPKFAELTCNNPSIPAAALVVDIREGSGLKSFPKVFAKIRKSVTARLIFLEADNDAIVRRFSETRRPHPLGTGKSITRSIQSERTQLAPIRAMADLTINTSKFTVHELRDFIGERFRGRRDQSDIMIYVASFGYRNGVPPDSDLVFDVRFLPNPNYIPRFKNLTGRNPDVAGYIRSFPQTVEFINRISDLLVYLLPHYIREGKSYLTISFGCTGGQHRSVMIADEIKRNLSSAGYTAKVNHRDIVKAR.

The tract at residues 1 to 34 (MPLRKKGAATTKAAATRKDSAKAPASSKRKDAPQ) is disordered. 44–51 (GLSGSGKG) serves as a coordination point for ATP. Position 94–97 (94–97 (DIRE)) interacts with GTP.

It belongs to the RapZ-like family.

Displays ATPase and GTPase activities. The polypeptide is Nucleotide-binding protein Acid_7395 (Solibacter usitatus (strain Ellin6076)).